A 134-amino-acid polypeptide reads, in one-letter code: TSC22 domain family protein 3 (134 aa).

At Met1 the chain carries N-acetylmethionine. The segment at 1–60 is AP1-binding; sequence MNTEMYQTPMEVAVYQLHNFSISFFSSLLGGDVVSVKLDNSASGASVVAIDNKIEQAMDL. Residues Ala42 and Val73 each carry the phosphoserine modification. The interval 76 to 97 is leucine-zipper; the sequence is LKEQIRELVEKNSQLERENTLL. Ser102 is subject to Phosphoserine. Positions 108–134 are disordered; the sequence is KFQSCLSPEEPAPESPQVPEAPGGSAV.

This sequence belongs to the TSC-22/Dip/Bun family. In terms of assembly, can form homodimers, however it is likely to function as a monomer. Interacts with NFKB1. Interacts (via N-terminus) with JUN and FOS; these interactions inhibit the binding of active AP1 to its target DNA. As to quaternary structure, interacts with MYOD1. Interacts with HDAC1; this interaction affects HDAC1 activity on MYOG promoter and thus inhibits MYOD1 transcriptional activity. In terms of tissue distribution, ubiquitously expressed, including in the fetal brain and liver. Expressed in brain, lung, spleen and skeletal muscle. Lower levels detected in heart and kidney. Not detected in the pancreas. In non-lymphoid tissues, in the absence of inflammation, the major source of constitutive expression is the macrophage lineage. Also expressed in cells from different hemopoietic cell lineages, including bone marrow cells, CD34+ stem cells, mature B- and T-cells, monocytes and granulocytes. Down-regulated in activated macrophages from inflammatory lesions of delayed-type hypersensitivity (DTH) reactions, such as in tuberculosis and in Crohn disease, whereas in Burkitt lymphoma, persists in macrophages involved in the phagocytosis of apoptotic malignant cells.

It localises to the cytoplasm. The protein localises to the nucleus. Functionally, protects T-cells from IL2 deprivation-induced apoptosis through the inhibition of FOXO3A transcriptional activity that leads to the down-regulation of the pro-apoptotic factor BCL2L11. In macrophages, plays a role in the anti-inflammatory and immunosuppressive effects of glucocorticoids and IL10. In T-cells, inhibits anti-CD3-induced NFKB1 nuclear translocation and thereby NFKB1 DNA-binding activities. In vitro, suppresses AP-1 transcription factor complex DNA-binding activities. Its function is as follows. Inhibits myogenic differentiation and mediates anti-myogenic effects of glucocorticoids by binding and regulating MYOD1 and HDAC1 transcriptional activity resulting in reduced expression of MYOG. This is TSC22 domain family protein 3 from Homo sapiens (Human).